Here is a 217-residue protein sequence, read N- to C-terminus: Probable disulfide bond formation protein D (217 aa).

The N-terminal stretch at 1–28 (MKSSNKLMALGIVFSIAVLIVIGTIVYS) is a signal peptide. Cysteine 66 and cysteine 69 form a disulfide bridge.

The protein belongs to the thioredoxin family. DsbA subfamily.

May be required for disulfide bond formation in some proteins. This Bacillus anthracis protein is Probable disulfide bond formation protein D (bdbD).